Consider the following 342-residue polypeptide: Pre-mRNA-splicing factor 18 (342 aa).

This sequence belongs to the PRP18 family. In terms of assembly, interacts with the spliceosome. Part of a complex containing U4/U6 snRNPs.

The protein localises to the nucleus speckle. Its function is as follows. Participates in the second step of pre-mRNA splicing. The chain is Pre-mRNA-splicing factor 18 (prpf18) from Xenopus laevis (African clawed frog).